The primary structure comprises 150 residues: UPF0506 protein SJCHGC02380 (150 aa).

Residues 1–18 (MNTCIQLLILCLVTVINS) form the signal peptide. Residues Asn-20, Asn-24, Asn-36, Asn-48, Asn-52, and Asn-110 are each glycosylated (N-linked (GlcNAc...) asparagine). Intrachain disulfides connect Cys-116-Cys-130, Cys-123-Cys-134, and Cys-129-Cys-139.

This sequence belongs to the UPF0506 family.

It localises to the secreted. In Schistosoma japonicum (Blood fluke), this protein is UPF0506 protein SJCHGC02380.